The sequence spans 80 residues: Defensin-like protein 17 (80 aa).

A signal peptide spans 1–29 (MAKSATIITFLFAALVLFAAFEAPTMVEA). The residue at position 30 (Gln-30) is a Pyrrolidone carboxylic acid. Intrachain disulfides connect Cys-33-Cys-80, Cys-44-Cys-65, Cys-50-Cys-74, and Cys-54-Cys-76.

The protein belongs to the DEFL family.

Its subcellular location is the secreted. In terms of biological role, confers broad-spectrum resistance to pathogens. The chain is Defensin-like protein 17 (PDF1.2C) from Arabidopsis thaliana (Mouse-ear cress).